The primary structure comprises 394 residues: Phosphopentomutase (394 aa).

Positions 13, 286, 291, 327, 328, and 339 each coordinate Mn(2+).

Belongs to the phosphopentomutase family. It depends on Mn(2+) as a cofactor.

Its subcellular location is the cytoplasm. The catalysed reaction is 2-deoxy-alpha-D-ribose 1-phosphate = 2-deoxy-D-ribose 5-phosphate. It catalyses the reaction alpha-D-ribose 1-phosphate = D-ribose 5-phosphate. It participates in carbohydrate degradation; 2-deoxy-D-ribose 1-phosphate degradation; D-glyceraldehyde 3-phosphate and acetaldehyde from 2-deoxy-alpha-D-ribose 1-phosphate: step 1/2. In terms of biological role, isomerase that catalyzes the conversion of deoxy-ribose 1-phosphate (dRib-1-P) and ribose 1-phosphate (Rib-1-P) to deoxy-ribose 5-phosphate (dRib-5-P) and ribose 5-phosphate (Rib-5-P), respectively. The protein is Phosphopentomutase of Bacillus mycoides (strain KBAB4) (Bacillus weihenstephanensis).